The following is a 1641-amino-acid chain: Alpha-2-macroglobulin (1641 aa).

Residues Met-1–Gly-31 form the signal peptide. Residue Cys-32 is the site of N-palmitoyl cysteine attachment. Cys-32 carries S-diacylglycerol cysteine lipidation. Residues Cys-1166–Gln-1169 constitute a cross-link (isoglutamyl cysteine thioester (Cys-Gln)).

It belongs to the protease inhibitor I39 (alpha-2-macroglobulin) family. Bacterial alpha-2-macroglobulin subfamily.

The protein localises to the cell membrane. Its function is as follows. Protects the bacterial cell from host peptidases. The protein is Alpha-2-macroglobulin of Xylella fastidiosa (strain Temecula1 / ATCC 700964).